The chain runs to 208 residues: uncharacterized protein (208 aa).

This is an uncharacterized protein from Bacillus subtilis (strain 168).